The primary structure comprises 445 residues: Phosphoglucosamine mutase 1 (445 aa).

S102 (phosphoserine intermediate) is an active-site residue. Mg(2+)-binding residues include S102, D241, D243, and D245. A Phosphoserine modification is found at S102.

It belongs to the phosphohexose mutase family. It depends on Mg(2+) as a cofactor. Activated by phosphorylation.

The catalysed reaction is alpha-D-glucosamine 1-phosphate = D-glucosamine 6-phosphate. In terms of biological role, catalyzes the conversion of glucosamine-6-phosphate to glucosamine-1-phosphate. This chain is Phosphoglucosamine mutase 1, found in Shewanella sp. (strain MR-4).